The sequence spans 351 residues: Paired box protein 2 homolog (351 aa).

The segment at residues 91-217 (SHTGVNQLGG…SSINRIVRNK (127 aa)) is a DNA-binding region (paired). Residues 94-150 (GVNQLGGVFVNGRPLPDTIRAQIVEMSQHGTRPCDISRQLKVSHGCVSKILGRYYST) are PAI subdomain. The segment at 169 to 217 (RVVECIAGYKRANPTMFAWEIRQKLIEDQICGEENVPSVSSINRIVRNK) is RED subdomain. The segment covering 226 to 246 (PTSVTPSVARPSSATSQNQRS) has biased composition (polar residues). Residues 226–258 (PTSVTPSVARPSSATSQNQRSPPRGVQQHMQQS) form a disordered region.

It is found in the nucleus. Its subcellular location is the chromosome. Functionally, transcription factor. Involved in negatively modulating apoptosis in germline and somatic cells, acting in partial redundancy with transcription factor egl-38/PAX5, probably by directly regulating transcription of apoptosis regulator ced-9. May bind to the DNA sequence motif 5'-GTAACG-3' in regulatory elements. In Caenorhabditis elegans, this protein is Paired box protein 2 homolog.